Consider the following 277-residue polypeptide: Putative phosphoenolpyruvate synthase regulatory protein (277 aa).

An ADP-binding site is contributed by 157-164; the sequence is GVSRSGKT.

This sequence belongs to the pyruvate, phosphate/water dikinase regulatory protein family. PSRP subfamily.

The catalysed reaction is [pyruvate, water dikinase] + ADP = [pyruvate, water dikinase]-phosphate + AMP + H(+). It carries out the reaction [pyruvate, water dikinase]-phosphate + phosphate + H(+) = [pyruvate, water dikinase] + diphosphate. Its function is as follows. Bifunctional serine/threonine kinase and phosphorylase involved in the regulation of the phosphoenolpyruvate synthase (PEPS) by catalyzing its phosphorylation/dephosphorylation. The chain is Putative phosphoenolpyruvate synthase regulatory protein from Azoarcus sp. (strain BH72).